Here is a 1187-residue protein sequence, read N- to C-terminus: DNA-directed RNA polymerase subunit beta (1187 aa).

The interval K1150 to Q1187 is disordered. Basic and acidic residues predominate over residues A1173–Q1187.

Belongs to the RNA polymerase beta chain family. In terms of assembly, the RNAP catalytic core consists of 2 alpha, 1 beta, 1 beta' and 1 omega subunit. When a sigma factor is associated with the core the holoenzyme is formed, which can initiate transcription.

It catalyses the reaction RNA(n) + a ribonucleoside 5'-triphosphate = RNA(n+1) + diphosphate. In terms of biological role, DNA-dependent RNA polymerase catalyzes the transcription of DNA into RNA using the four ribonucleoside triphosphates as substrates. The chain is DNA-directed RNA polymerase subunit beta from Bifidobacterium longum (strain DJO10A).